A 472-amino-acid polypeptide reads, in one-letter code: 3-isopropylmalate dehydratase large subunit (472 aa).

Residues Cys352, Cys412, and Cys415 each contribute to the [4Fe-4S] cluster site.

Belongs to the aconitase/IPM isomerase family. LeuC type 1 subfamily. Heterodimer of LeuC and LeuD. Requires [4Fe-4S] cluster as cofactor.

The enzyme catalyses (2R,3S)-3-isopropylmalate = (2S)-2-isopropylmalate. It participates in amino-acid biosynthesis; L-leucine biosynthesis; L-leucine from 3-methyl-2-oxobutanoate: step 2/4. In terms of biological role, catalyzes the isomerization between 2-isopropylmalate and 3-isopropylmalate, via the formation of 2-isopropylmaleate. The protein is 3-isopropylmalate dehydratase large subunit of Roseiflexus castenholzii (strain DSM 13941 / HLO8).